Consider the following 574-residue polypeptide: Glutamyl-tRNA(Gln) amidotransferase subunit B, mitochondrial (574 aa).

The transit peptide at 1-12 (MIRQFVSHRGIP) directs the protein to the mitochondrion. The disordered stretch occupies residues 34 to 62 (PLGRKNWSTSDEAKSKRAAMRKGGAPPPE).

It belongs to the GatB/GatE family. GatB subfamily. In terms of assembly, subunit of the heterotrimeric GatCAB amidotransferase (AdT) complex, composed of A, B and C subunits.

Its subcellular location is the mitochondrion. It catalyses the reaction L-glutamyl-tRNA(Gln) + L-glutamine + ATP + H2O = L-glutaminyl-tRNA(Gln) + L-glutamate + ADP + phosphate + H(+). In terms of biological role, allows the formation of correctly charged Gln-tRNA(Gln) through the transamidation of misacylated Glu-tRNA(Gln) in the mitochondria. The reaction takes place in the presence of glutamine and ATP through an activated gamma-phospho-Glu-tRNA(Gln). This Ajellomyces capsulatus (strain H143) (Darling's disease fungus) protein is Glutamyl-tRNA(Gln) amidotransferase subunit B, mitochondrial.